The sequence spans 381 residues: Testis-specific expressed protein 55 (381 aa).

Disordered regions lie at residues 1 to 176 (MDEP…SDPH) and 292 to 317 (TTEYTSDTTPVFDQGRSSQRSSQSSR). Composition is skewed to basic and acidic residues over residues 8–24 (SLNHENTTRAPDNEKNN) and 65–103 (RTSEEAEQRSSQPTEHRLPGHAERRASQQAERRLSERRT). Polar residues predominate over residues 104–113 (SQPPNQQLPS). Positions 114-125 (HSERKTSGKIDG) are enriched in basic and acidic residues. Residues 134–143 (TDQETSEFDD) are compositionally biased toward acidic residues. Composition is skewed to polar residues over residues 147 to 163 (SASTDYLSARSQQQEYN) and 292 to 302 (TTEYTSDTTPV). Over residues 307 to 317 (RSSQRSSQSSR) the composition is skewed to low complexity.

In terms of tissue distribution, testis-specific.

It localises to the nucleus. This is Testis-specific expressed protein 55 from Mus musculus (Mouse).